A 62-amino-acid polypeptide reads, in one-letter code: Large ribosomal subunit protein uL30 (62 aa).

This sequence belongs to the universal ribosomal protein uL30 family. In terms of assembly, part of the 50S ribosomal subunit.

In Gluconobacter oxydans (strain 621H) (Gluconobacter suboxydans), this protein is Large ribosomal subunit protein uL30.